The chain runs to 149 residues: Calmodulin-3 (149 aa).

Ala-2 is subject to N-acetylalanine. 4 EF-hand domains span residues 8-43 (DQIA…LGQN), 44-79 (PTEA…KMKD), 81-116 (DSEE…LGEK), and 117-149 (LTDE…MMAK). Positions 21, 23, 25, 27, 32, 57, 59, 61, 63, 68, 94, 96, 98, and 105 each coordinate Ca(2+). Lys-116 is subject to N6,N6,N6-trimethyllysine. Residues Asp-130, Asp-132, Asp-134, Gln-136, and Glu-141 each coordinate Ca(2+).

It belongs to the calmodulin family.

Calmodulin mediates the control of a large number of enzymes, ion channels and other proteins by Ca(2+). Among the enzymes to be stimulated by the calmodulin-Ca(2+) complex are a number of protein kinases and phosphatases. The sequence is that of Calmodulin-3 (CAM3) from Oryza sativa subsp. japonica (Rice).